The sequence spans 240 residues: Transmembrane emp24 domain-containing protein 6 (240 aa).

A signal peptide spans 1 to 21 (MSPLLFGAGLVVLNLVTSARS). Topologically, residues 22 to 200 (QKTEPLSGSG…FFLIQSNYNY (179 aa)) are lumenal. The GOLD domain occupies 53 to 138 (TECFWQFAHQ…SVQVYLNFGV (86 aa)). Asn107 and Asn156 each carry an N-linked (GlcNAc...) asparagine glycan. Residues 201–223 (VNWWSTAQSLVIILSGILQLYFL) form a helical membrane-spanning segment. The Cytoplasmic portion of the chain corresponds to 224-240 (KRLFNVPTTTDTKKPRC).

This sequence belongs to the EMP24/GP25L family.

It localises to the endoplasmic reticulum membrane. The protein is Transmembrane emp24 domain-containing protein 6 (TMED6) of Homo sapiens (Human).